The following is a 653-amino-acid chain: Phospholipid-transporting ATPase VD (653 aa).

The Cytoplasmic segment spans residues 1-375 (MACNLCYEAE…GHWCYTRLSN (375 aa)). ATP-binding positions include Glu14, Phe56, Lys80, Arg124, Thr204, Gly205, Asp206, 259 to 266 (GLIITGKT), Arg293, and Lys299. Residue Asp319 coordinates Mg(2+). Asn322 and Asp323 together coordinate ATP. Asp323 serves as a coordination point for Mg(2+). The helical transmembrane segment at 376–396 (MILYFFYKNVAYVNLLFWYQF) threads the bilayer. The Exoplasmic loop segment spans residues 397-407 (FCGFSGTSMTD). Residues 408–428 (YWVLIFFNLLFTSAPPVIYGV) form a helical membrane-spanning segment. At 429 to 458 (LEKDVSAETLMQLPELYKSGQKSEAYLPHT) the chain is on the cytoplasmic side. A helical membrane pass occupies residues 459–480 (FWITLLDAFYQSLVCFFVPYFT). The Exoplasmic loop portion of the chain corresponds to 481–487 (YQGSDID). The chain crosses the membrane as a helical span at residues 488 to 510 (IFAFGNPLNTAALFIILLHLIIE). Residues 511–516 (SKSLTW) are Cytoplasmic-facing. Residues 517 to 537 (IHMLVITGSILSYFLFAIVFG) form a helical membrane-spanning segment. Residues 538-555 (AMCVTCNPPSNPYWIMQE) are Exoplasmic loop-facing. Residues 556–580 (HVLDPVFYLVCILTTCIALLPRFVY) form a helical membrane-spanning segment. Residues 581–653 (RGAGKMNQVT…AFEMARPCKD (73 aa)) are Cytoplasmic-facing.

The protein belongs to the cation transport ATPase (P-type) (TC 3.A.3) family. Type IV subfamily. Component of a P4-ATPase flippase complex which consists of a catalytic alpha subunit ATP10A and an accessory beta subunit TMEM30A. Mg(2+) is required as a cofactor. Autophosphorylated at the conserved aspartate of the P-type ATPase signature sequence.

The protein resides in the cell membrane. The protein localises to the endoplasmic reticulum membrane. The catalysed reaction is ATP + H2O + phospholipidSide 1 = ADP + phosphate + phospholipidSide 2.. The enzyme catalyses a beta-D-glucosyl-(1&lt;-&gt;1')-N-acylsphing-4-enine(out) + ATP + H2O = a beta-D-glucosyl-(1&lt;-&gt;1')-N-acylsphing-4-enine(in) + ADP + phosphate + H(+). In terms of biological role, catalytic component of a P4-ATPase flippase complex, which catalyzes the hydrolysis of ATP coupled to the transport of glucosylceramide (GlcCer) from the outer to the inner leaflet of the plasma membrane. This is Phospholipid-transporting ATPase VD (ATP10D) from Macaca fascicularis (Crab-eating macaque).